The primary structure comprises 460 residues: Argininosuccinate lyase (460 aa).

It belongs to the lyase 1 family. Argininosuccinate lyase subfamily.

It localises to the cytoplasm. It carries out the reaction 2-(N(omega)-L-arginino)succinate = fumarate + L-arginine. It participates in amino-acid biosynthesis; L-arginine biosynthesis; L-arginine from L-ornithine and carbamoyl phosphate: step 3/3. This is Argininosuccinate lyase from Solibacter usitatus (strain Ellin6076).